Consider the following 135-residue polypeptide: MAALRPLVKPKIVKKRTKKFIRHQSDRYVKIKRNWRKPRGIDNRVRRRFKGQILMPNIGYGSNKKTKHMLPSGFRKFLVHNVKELEVLLMCNKSYCAEIAHNVSSKNRKAIVERAAQLAIRVTNPNARLRSEENE.

Lys9 is covalently cross-linked (Glycyl lysine isopeptide (Lys-Gly) (interchain with G-Cter in SUMO2)). Lys50 is modified (N6-succinyllysine). Ser62 bears the Phosphoserine mark.

This sequence belongs to the eukaryotic ribosomal protein eL32 family. Component of the large ribosomal subunit.

It localises to the cytoplasm. Its function is as follows. Component of the large ribosomal subunit. The ribosome is a large ribonucleoprotein complex responsible for the synthesis of proteins in the cell. The sequence is that of Large ribosomal subunit protein eL32 (RPL32) from Macaca fascicularis (Crab-eating macaque).